We begin with the raw amino-acid sequence, 90 residues long: Small ribosomal subunit protein uS15c (90 aa).

The protein belongs to the universal ribosomal protein uS15 family. Part of the 30S ribosomal subunit.

It is found in the plastid. The protein localises to the chloroplast. The polypeptide is Small ribosomal subunit protein uS15c (rps15) (Liriodendron tulipifera (Tuliptree)).